A 409-amino-acid polypeptide reads, in one-letter code: Argininosuccinate synthase (409 aa).

Residues 11–19 and Ala38 each bind ATP; that span reads AYSGGLDTS. Residues Tyr91 and Ser96 each contribute to the L-citrulline site. An ATP-binding site is contributed by Gly121. 3 residues coordinate L-aspartate: Thr123, Asn127, and Asp128. Residue Asn127 participates in L-citrulline binding. Residues Arg131, Ser182, Ser191, Glu267, and Tyr279 each contribute to the L-citrulline site.

The protein belongs to the argininosuccinate synthase family. Type 1 subfamily. As to quaternary structure, homotetramer.

Its subcellular location is the cytoplasm. It carries out the reaction L-citrulline + L-aspartate + ATP = 2-(N(omega)-L-arginino)succinate + AMP + diphosphate + H(+). The protein operates within amino-acid biosynthesis; L-arginine biosynthesis; L-arginine from L-ornithine and carbamoyl phosphate: step 2/3. This Nitrobacter hamburgensis (strain DSM 10229 / NCIMB 13809 / X14) protein is Argininosuccinate synthase.